Consider the following 405-residue polypeptide: Elongation factor Tu (405 aa).

Positions 10–213 constitute a tr-type G domain; it reads KEHVNVGTIG…AMDEYIPTPE (204 aa). Residues 19-26 form a G1 region; it reads GHVDHGKS. 19-26 contributes to the GTP binding site; it reads GHVDHGKS. Residue S26 coordinates Mg(2+). The tract at residues 64 to 68 is G2; it reads GITIN. Positions 85–88 are G3; sequence DCPG. GTP contacts are provided by residues 85–89 and 140–143; these read DCPGH and NKCD. Positions 140 to 143 are G4; that stretch reads NKCD. A G5 region spans residues 178–180; that stretch reads SAL.

This sequence belongs to the TRAFAC class translation factor GTPase superfamily. Classic translation factor GTPase family. EF-Tu/EF-1A subfamily. As to quaternary structure, monomer.

The protein resides in the cytoplasm. It carries out the reaction GTP + H2O = GDP + phosphate + H(+). GTP hydrolase that promotes the GTP-dependent binding of aminoacyl-tRNA to the A-site of ribosomes during protein biosynthesis. The polypeptide is Elongation factor Tu (Aquifex pyrophilus).